We begin with the raw amino-acid sequence, 122 residues long: Fluoride-specific ion channel FluC (122 aa).

4 helical membrane-spanning segments follow: residues 1–21 (MIGTILAVGFGGFLGAISRML), 34–54 (FPYGTLLVNIIGSFLMGLFFS), 60–80 (GVHIFTKSLISTGFLSAFTTF), and 100–120 (FLNIILNVILCLLAVWIGFLI).

This sequence belongs to the fluoride channel Fluc/FEX (TC 1.A.43) family.

The protein localises to the cell inner membrane. The catalysed reaction is fluoride(in) = fluoride(out). In terms of biological role, fluoride-specific ion channel. Important for reducing fluoride concentration in the cell, thus reducing its toxicity. The polypeptide is Fluoride-specific ion channel FluC (Campylobacter lari (strain RM2100 / D67 / ATCC BAA-1060)).